The sequence spans 432 residues: Glutamate-1-semialdehyde 2,1-aminomutase (432 aa).

Position 272 is an N6-(pyridoxal phosphate)lysine (lysine 272).

This sequence belongs to the class-III pyridoxal-phosphate-dependent aminotransferase family. HemL subfamily. Homodimer. Pyridoxal 5'-phosphate serves as cofactor.

The protein resides in the cytoplasm. The enzyme catalyses (S)-4-amino-5-oxopentanoate = 5-aminolevulinate. The protein operates within porphyrin-containing compound metabolism; protoporphyrin-IX biosynthesis; 5-aminolevulinate from L-glutamyl-tRNA(Glu): step 2/2. It functions in the pathway porphyrin-containing compound metabolism; chlorophyll biosynthesis. This chain is Glutamate-1-semialdehyde 2,1-aminomutase, found in Acaryochloris marina (strain MBIC 11017).